Reading from the N-terminus, the 439-residue chain is F-box/FBD/LRR-repeat protein At5g56570 (439 aa).

In terms of domain architecture, F-box spans 35-81; that stretch reads PTELSDMPDDLIFKIFSFLPFFKEDLATRFISEYGKGLWNPDPNAIF. LRR repeat units lie at residues 155–177 and 223–246; these read CTTL…WFRL and VPTL…SFWI. The 51-residue stretch at 361-411 folds into the FBD domain; the sequence is VWEKPTVVPECLSTRLEILKWRDYEGTEHEKDMVGYILANATFLQRATFST.

This is F-box/FBD/LRR-repeat protein At5g56570 from Arabidopsis thaliana (Mouse-ear cress).